A 363-amino-acid polypeptide reads, in one-letter code: Tetraacyldisaccharide 4'-kinase (363 aa).

62 to 69 (RVGGTGKT) provides a ligand contact to ATP.

The protein belongs to the LpxK family.

It carries out the reaction a lipid A disaccharide + ATP = a lipid IVA + ADP + H(+). It participates in glycolipid biosynthesis; lipid IV(A) biosynthesis; lipid IV(A) from (3R)-3-hydroxytetradecanoyl-[acyl-carrier-protein] and UDP-N-acetyl-alpha-D-glucosamine: step 6/6. Functionally, transfers the gamma-phosphate of ATP to the 4'-position of a tetraacyldisaccharide 1-phosphate intermediate (termed DS-1-P) to form tetraacyldisaccharide 1,4'-bis-phosphate (lipid IVA). The chain is Tetraacyldisaccharide 4'-kinase from Polynucleobacter asymbioticus (strain DSM 18221 / CIP 109841 / QLW-P1DMWA-1) (Polynucleobacter necessarius subsp. asymbioticus).